A 755-amino-acid chain; its full sequence is MGRGTLALGWAGAALLLLQMLAAAERSPRTPGGKAGVFADLSAQELKAVHSFLWSQKELKLEPSGTLTMAKNSVFLIEMLLPKKQHVLKFLDKGHRRPVREARAVIFFGAQEQPNVTEFAVGPLPTPRYMRDLPPRPGHQVSWASRPISKAEYALLSHKLQEATQPLRQFFRRTTGSSFGDCHEQCLTFTDVAPRGLASGQRRTWFILQRQMPGYFLHPTGLELLVDHGSTNAQDWTVEQVWYNGKFYRSPEELAQKYNDGEVDVVILEDPLAKGKDGESLPEPALFSFYQPRGDFAVTMHGPHVVQPQGPRYSLEGNRVMYGGWSFAFRLRSSSGLQILDVHFGGERIAYEVSVQEAVALYGGHTPAGMQTKYIDVGWGLGSVTHELAPDIDCPETATFLDALHHYDADGPVLYPRALCLFEMPTGVPLRRHFNSNFSGGFNFYAGLKGQVLVLRTTSTVYNYDYIWDFIFYPNGVMEAKMHATGYVHATFYTPEGLRYGTRLHTHLIGNMHTHLVNYRVDLDVAGTTNSFQTLQMELENITNPWSPRHRLVQPTLKQTRYSRERQAAFRFGQPLPKYLLITSPKENPWGHTRSYRLQLHSMADQVLPPGWQEERAVTWARYPLAVTRYRESELSSSSIYNQNDPWDPPVVFEEFLRNNENIEDEDLVAWVTVGFLHIPHSEDIPNTATPGNSVGFLLRPFNFFPEDPALASRDLVVVWPLENGSTYAQRWIPEEDQSCLKPPPFSYNGSYRPV.

An N-terminal signal peptide occupies residues methionine 1–alanine 24. N-linked (GlcNAc...) asparagine glycosylation is present at asparagine 115. A disulfide bridge connects residues cysteine 182 and cysteine 186. The active-site Proton acceptor is the aspartate 376. An intrachain disulfide couples cysteine 394 to cysteine 420. Tyrosine 464 (schiff-base intermediate with substrate; via topaquinone) is an active-site residue. Tyrosine 464 is subject to 2',4',5'-topaquinone. The Cu(2+) site is built by histidine 513 and histidine 515. The Ca(2+) site is built by aspartate 522, leucine 523, and aspartate 524. An N-linked (GlcNAc...) asparagine glycan is attached at asparagine 541. 6 residues coordinate Ca(2+): glutamate 565, phenylalanine 656, asparagine 659, glutamate 661, aspartate 667, and leucine 668. Residue histidine 678 coordinates Cu(2+). N-linked (GlcNAc...) asparagine glycosylation is present at asparagine 749.

It belongs to the copper/topaquinone oxidase family. As to quaternary structure, homodimer; disulfide-linked. It depends on Cu(2+) as a cofactor. Ca(2+) serves as cofactor. L-topaquinone is required as a cofactor. Post-translationally, topaquinone (TPQ) is generated by copper-dependent autoxidation of a specific tyrosyl residue. N-glycosylated; the glycans are primarily linear, di-, or tribranched fucosylated complex type.

It localises to the secreted. It is found in the extracellular space. The protein localises to the cell membrane. The catalysed reaction is histamine + O2 + H2O = imidazole-4-acetaldehyde + H2O2 + NH4(+). It carries out the reaction N(tau)-methylhistamine + O2 + H2O = 1-methylimidazole-4-acetaldehyde + H2O2 + NH4(+). It catalyses the reaction putrescine + O2 + H2O = 4-aminobutanal + H2O2 + NH4(+). The enzyme catalyses cadaverine + O2 + H2O = 5-aminopentanal + H2O2 + NH4(+). Inhibited by amiloride and amiloride analogs. Functionally, catalyzes the oxidative deamination of primary amines to the corresponding aldehydes with the concomitant production of hydrogen peroxide and ammonia. Its preferred substrates in vitro are the diamines histamine and 1-methylhistamine and it could therefore play a role in allergic and immune responses. Has a broad specificity for diamines and can also act on cadaverine and putrescine, two products of amino acid catabolism. It could also act on polyamines, like spermidine and spermine though less efficiently, and regulate various biological processes. The chain is Diamine oxidase [copper-containing] from Sus scrofa (Pig).